The primary structure comprises 339 residues: O-methyltransferase 7 (339 aa).

5 residues coordinate S-adenosyl-L-methionine: Gly186, Asp209, Ser232, Phe233, and Lys246. His250 acts as the Proton acceptor in catalysis.

The protein belongs to the class I-like SAM-binding methyltransferase superfamily. Cation-independent O-methyltransferase family. COMT subfamily.

It catalyses the reaction (3,5-dichloro-2,4,6-trihydroxyphenyl)hexan-1-one + S-adenosyl-L-methionine = 1-(3,5-dichloro-2,6-dihydroxy-4-methoxyphenyl)hexan-1-one + S-adenosyl-L-homocysteine + H(+). This is O-methyltransferase 7 (omt7) from Dictyostelium discoideum (Social amoeba).